The chain runs to 179 residues: MKKNLTNIYLIGLMGAGKTSVGSQLAKLTKRILYDSDKEIEKRTGADIAWIFEMEGEAGFRRREREMIEALCKLDNIILATGGGVVLDEKNRQQISETGVVIYLTASIDTQLKRIGQKGEMRRPLFIKNNSKEKLQQLNEIRKPLYQAMADLVYPTDDLNPRQLATQILVDIKQTYSDL.

Residue 15–20 coordinates ATP; that stretch reads GAGKTS. Thr-19 serves as a coordination point for Mg(2+). Positions 37, 61, and 83 each coordinate substrate. Arg-123 is an ATP binding site. Arg-142 lines the substrate pocket.

The protein belongs to the shikimate kinase family. As to quaternary structure, monomer. Mg(2+) serves as cofactor.

The protein localises to the cytoplasm. It carries out the reaction shikimate + ATP = 3-phosphoshikimate + ADP + H(+). It participates in metabolic intermediate biosynthesis; chorismate biosynthesis; chorismate from D-erythrose 4-phosphate and phosphoenolpyruvate: step 5/7. Catalyzes the specific phosphorylation of the 3-hydroxyl group of shikimic acid using ATP as a cosubstrate. In Coxiella burnetii (strain CbuG_Q212) (Coxiella burnetii (strain Q212)), this protein is Shikimate kinase.